Reading from the N-terminus, the 246-residue chain is Tyrosine recombinase XerD-like (246 aa).

The Core-binding (CB) domain maps to 1–72; sequence MINDINNFIE…AVNQFLFFLY (72 aa). The 163-residue stretch at 84–246 folds into the Tyr recombinase domain; the sequence is QETEKITLAQ…TPITLERYYR (163 aa). Residues Lys-149 and Arg-212 contribute to the active site. The active-site O-(3'-phospho-DNA)-tyrosine intermediate is Tyr-244.

It belongs to the 'phage' integrase family. XerD-like subfamily.

Its subcellular location is the cytoplasm. Putative tyrosine recombinase. Not involved in the cutting and rejoining of the recombining DNA molecules on dif(SL) site. The protein is Tyrosine recombinase XerD-like of Streptococcus agalactiae serotype V (strain ATCC BAA-611 / 2603 V/R).